Here is a 271-residue protein sequence, read N- to C-terminus: uncharacterized protein (271 aa).

This is an uncharacterized protein from Acanthamoeba polyphaga mimivirus (APMV).